A 269-amino-acid chain; its full sequence is Formamidopyrimidine-DNA glycosylase (269 aa).

The active-site Schiff-base intermediate with DNA is the Pro2. Glu3 (proton donor) is an active-site residue. Lys57 functions as the Proton donor; for beta-elimination activity in the catalytic mechanism. 3 residues coordinate DNA: His90, Arg109, and Lys150. Residues 235–269 (QVYGRKGEPCRVCGTPIVATKHAQRATFYCRHCQK) form an FPG-type zinc finger. Arg259 functions as the Proton donor; for delta-elimination activity in the catalytic mechanism.

Belongs to the FPG family. In terms of assembly, monomer. Requires Zn(2+) as cofactor.

The enzyme catalyses Hydrolysis of DNA containing ring-opened 7-methylguanine residues, releasing 2,6-diamino-4-hydroxy-5-(N-methyl)formamidopyrimidine.. The catalysed reaction is 2'-deoxyribonucleotide-(2'-deoxyribose 5'-phosphate)-2'-deoxyribonucleotide-DNA = a 3'-end 2'-deoxyribonucleotide-(2,3-dehydro-2,3-deoxyribose 5'-phosphate)-DNA + a 5'-end 5'-phospho-2'-deoxyribonucleoside-DNA + H(+). Its function is as follows. Involved in base excision repair of DNA damaged by oxidation or by mutagenic agents. Acts as a DNA glycosylase that recognizes and removes damaged bases. Has a preference for oxidized purines, such as 7,8-dihydro-8-oxoguanine (8-oxoG). Has AP (apurinic/apyrimidinic) lyase activity and introduces nicks in the DNA strand. Cleaves the DNA backbone by beta-delta elimination to generate a single-strand break at the site of the removed base with both 3'- and 5'-phosphates. This chain is Formamidopyrimidine-DNA glycosylase, found in Salmonella paratyphi C (strain RKS4594).